Consider the following 539-residue polypeptide: MICOS complex subunit MIC60 (539 aa).

The N-terminal 16 residues, 1 to 16 (MLRTTASRKIVLRRGL), are a transit peptide targeting the mitochondrion. Residues 17–36 (ASINTGTTVASKKASHKFRN) are Mitochondrial matrix-facing. A helical membrane pass occupies residues 37–56 (TFWTIALSATAFYAGGIIYS). Residues 57 to 539 (QKNDKFGDFF…EILDCEIRTL (483 aa)) are Mitochondrial intermembrane-facing. A coiled-coil region spans residues 172–267 (NSIKKSNQNM…ELLQAKHANE (96 aa)).

The protein belongs to the MICOS complex subunit Mic60 family. In terms of assembly, component of the mitochondrial contact site and cristae organizing system (MICOS) complex.

The protein localises to the mitochondrion inner membrane. Component of the MICOS complex, a large protein complex of the mitochondrial inner membrane that plays crucial roles in the maintenance of crista junctions, inner membrane architecture, and formation of contact sites to the outer membrane. Plays a role in keeping cristae membranes connected to the inner boundary membrane. Also promotes protein import via the mitochondrial intermembrane space assembly (MIA) pathway. In Saccharomyces cerevisiae (strain YJM789) (Baker's yeast), this protein is MICOS complex subunit MIC60 (MIC60).